The primary structure comprises 402 residues: CCA-adding enzyme (402 aa).

ATP-binding residues include glycine 32 and arginine 35. Glycine 32 and arginine 35 together coordinate CTP. Positions 45 and 47 each coordinate Mg(2+). ATP is bound by residues arginine 116, aspartate 159, arginine 162, arginine 165, and arginine 168. CTP-binding residues include arginine 116, aspartate 159, arginine 162, arginine 165, and arginine 168.

This sequence belongs to the tRNA nucleotidyltransferase/poly(A) polymerase family. Bacterial CCA-adding enzyme type 3 subfamily. As to quaternary structure, homodimer. Mg(2+) serves as cofactor.

The catalysed reaction is a tRNA precursor + 2 CTP + ATP = a tRNA with a 3' CCA end + 3 diphosphate. The enzyme catalyses a tRNA with a 3' CCA end + 2 CTP + ATP = a tRNA with a 3' CCACCA end + 3 diphosphate. Its function is as follows. Catalyzes the addition and repair of the essential 3'-terminal CCA sequence in tRNAs without using a nucleic acid template. Adds these three nucleotides in the order of C, C, and A to the tRNA nucleotide-73, using CTP and ATP as substrates and producing inorganic pyrophosphate. tRNA 3'-terminal CCA addition is required both for tRNA processing and repair. Also involved in tRNA surveillance by mediating tandem CCA addition to generate a CCACCA at the 3' terminus of unstable tRNAs. While stable tRNAs receive only 3'-terminal CCA, unstable tRNAs are marked with CCACCA and rapidly degraded. The chain is CCA-adding enzyme from Streptococcus pyogenes serotype M2 (strain MGAS10270).